The following is an 861-amino-acid chain: Methyltransferase/ribosomally synthesized type III borosin cyclic peptide precursor aboMAa (861 aa).

The methyltransferase domain stretch occupies residues 1–279 (MSSPAVETKV…AISTFYLPPK (279 aa)). Residues arginine 100, tyrosine 104, and tyrosine 126 contribute to the active site. S-adenosyl-L-methionine contacts are provided by tyrosine 126, histidine 128, valine 131, alanine 158, glutamine 200, alanine 241, serine 272, and threonine 273. A clasp domain region spans residues 280–408 (ALSPLHEESA…GLVRSVMKTS (129 aa)). The tract at residues 409–799 (PEDVAKQFVQ…PPDLEELPIP (391 aa)) is type III-specific C-terminal domain. 2 disordered regions span residues 575–596 (NGAFPSGGGGGSGGGGGSSSQG) and 772–801 (EAAEKDSAVDDEKFADEEPPDLEELPIPDA). Positions 579-593 (PSGGGGGSGGGGGSS) are enriched in gly residues. Residues 772–783 (EAAEKDSAVDDE) show a composition bias toward basic and acidic residues. Residues 784-797 (KFADEEPPDLEELP) are compositionally biased toward acidic residues. N-methylvaline is present on residues valine 805 and valine 807. Tandem repeats lie at residues 805 to 809 (VDVTD), 810 to 814 (VDVTD), 815 to 819 (VDVTD), 820 to 824 (VDVTD), 825 to 829 (VDVTD), 830 to 834 (VDVTD), 835 to 839 (VDVTD), 840 to 844 (VDVTD), and 845 to 849 (VDVTD). The interval 805–854 (VDVTDVDVTDVDVTDVDVTDVDVTDVDVTDVDVTDVDVTDVDVTDVDVVD) is 10 X 5 AA tandem repeats of VDVTD. Threonine 808 bears the N-methylthreonine mark. Residues valine 810 and valine 812 each carry the N-methylvaline modification. N-methylthreonine is present on threonine 813. Valine 815 and valine 817 each carry N-methylvaline. The residue at position 818 (threonine 818) is an N-methylthreonine. N-methylvaline is present on residues valine 820 and valine 822. Residue threonine 823 is modified to N-methylthreonine. Residues valine 825 and valine 827 each carry the N-methylvaline modification. The residue at position 828 (threonine 828) is an N-methylthreonine. Residues valine 830 and valine 832 each carry the N-methylvaline modification. Residue threonine 833 is modified to N-methylthreonine. The 10; approximate repeat unit spans residues 850-854 (VDVVD).

The protein in the N-terminal section; belongs to the precorrin methyltransferase family. Post-translationally, aboMA automethylates at Val-805, Val-807, Thr-808, Val-810, Val-812, Thr-813, Val-815, Val-817, Thr-818, Val-820, Val-822, Thr-823, Val-825, Val-827 and Thr-828, Val-830, Val-832 and T-833 before being processed by a prolyloligopeptidase which likely forms a peptidyl ester upon removal of the follower propeptide, which then undergoes macrocyclization with the N-terminus of the modified core peptide. Peptide backbone alpha-N-methylations change the physicochemical properties of amide bonds to provide structural constraints and other favorable characteristics including biological membrane permeability to peptides.

It functions in the pathway secondary metabolite biosynthesis. Its function is as follows. Fusion protein of the methyltransferase aboM and a type III borosin core peptide; part of the gene cluster that mediates the biosynthesis of a type III borosin, a highly methylated cyclic peptide with potent biological activities. Type III borosins derive from the C-terminus of the fusion protein, and it is the same protein that methylates its own C-terminus using S-adenosyl methionine (SAM). The C-terminus is subsequently cleaved off and macrocyclized by a prolyloligopeptidase to give the final product. The polypeptide is Methyltransferase/ribosomally synthesized type III borosin cyclic peptide precursor aboMAa (Anomoporia bombycina (Polyporus bombycinus)).